Consider the following 326-residue polypeptide: uncharacterized protein (326 aa).

One can recognise an S4 RNA-binding domain in the interval 15-76; it reads VRIEKFCLKL…IEPYLHNHSE (62 aa). The active site involves D147.

This sequence belongs to the pseudouridine synthase RluA family.

It catalyses the reaction a uridine in RNA = a pseudouridine in RNA. This is an uncharacterized protein from Mycoplasma pneumoniae (strain ATCC 29342 / M129 / Subtype 1) (Mycoplasmoides pneumoniae).